The chain runs to 56 residues: Large ribosomal subunit protein bL32 (56 aa).

A compositionally biased stretch (basic residues) spans methionine 1–arginine 16. Positions methionine 1–arginine 38 are disordered.

The protein belongs to the bacterial ribosomal protein bL32 family.

This chain is Large ribosomal subunit protein bL32, found in Colwellia psychrerythraea (strain 34H / ATCC BAA-681) (Vibrio psychroerythus).